An 82-amino-acid polypeptide reads, in one-letter code: Cytochrome b559 subunit alpha (82 aa).

Residues 22 to 36 traverse the membrane as a helical segment; that stretch reads VIHAVTLPSIFLAGF. Histidine 24 provides a ligand contact to heme.

This sequence belongs to the PsbE/PsbF family. As to quaternary structure, heterodimer of an alpha subunit and a beta subunit. PSII is composed of 1 copy each of membrane proteins PsbA, PsbB, PsbC, PsbD, PsbE, PsbF, PsbH, PsbI, PsbJ, PsbK, PsbL, PsbM, PsbT, PsbX, PsbY, PsbZ, Psb30/Ycf12, peripheral proteins PsbO, CyanoQ (PsbQ), PsbU, PsbV and a large number of cofactors. It forms dimeric complexes. Heme b serves as cofactor.

The protein resides in the cellular thylakoid membrane. This b-type cytochrome is tightly associated with the reaction center of photosystem II (PSII). PSII is a light-driven water:plastoquinone oxidoreductase that uses light energy to abstract electrons from H(2)O, generating O(2) and a proton gradient subsequently used for ATP formation. It consists of a core antenna complex that captures photons, and an electron transfer chain that converts photonic excitation into a charge separation. The protein is Cytochrome b559 subunit alpha of Synechococcus sp. (strain CC9605).